Reading from the N-terminus, the 402-residue chain is S-adenosylmethionine synthase (402 aa).

Residue histidine 15 coordinates ATP. Residue aspartate 17 participates in Mg(2+) binding. Glutamate 43 contributes to the K(+) binding site. Residues glutamate 56 and glutamine 99 each contribute to the L-methionine site. The tract at residues 99-109 (QSPDIAQGVDT) is flexible loop. ATP-binding positions include 174–176 (DGK), 247–248 (RF), aspartate 256, 262–263 (RK), alanine 279, and lysine 283. Aspartate 256 provides a ligand contact to L-methionine. Residue lysine 287 participates in L-methionine binding.

Belongs to the AdoMet synthase family. In terms of assembly, homotetramer; dimer of dimers. Mg(2+) is required as a cofactor. K(+) serves as cofactor.

The protein resides in the cytoplasm. It carries out the reaction L-methionine + ATP + H2O = S-adenosyl-L-methionine + phosphate + diphosphate. The protein operates within amino-acid biosynthesis; S-adenosyl-L-methionine biosynthesis; S-adenosyl-L-methionine from L-methionine: step 1/1. Functionally, catalyzes the formation of S-adenosylmethionine (AdoMet) from methionine and ATP. The overall synthetic reaction is composed of two sequential steps, AdoMet formation and the subsequent tripolyphosphate hydrolysis which occurs prior to release of AdoMet from the enzyme. The protein is S-adenosylmethionine synthase of Streptomyces coelicolor (strain ATCC BAA-471 / A3(2) / M145).